Here is a 354-residue protein sequence, read N- to C-terminus: Replication factor C subunit 5 (354 aa).

Residues Val5, Ser17, 43 to 51 (GPNGTGKKT), and Arg231 each bind ATP.

The protein belongs to the activator 1 small subunits family. Replication factor C (RFC) is a heteropentamer of subunits RFC1, RFC2, RFC3, RFC4 and RFC5 and forms a complex with POL30/PCNA in the presence of ATP. Component of the RAD24-RFC complex which consists of RAD24, RFC2, RFC3, RFC4 and RFC5 and associates with the checkpoint clamp DDC1:MEC3:RAD17 complex. Component of the ELG1-RFC complex which consists of ELG1, RFC2, RFC3, RFC4 and RFC5. Component of the CTF18-RFC complex, which consists of CTF18, CTF8, DCC1, RFC2, RFC3, RFC4 and RFC5. RFC5 interacts with ECO1.

Its subcellular location is the nucleus. Its function is as follows. Component of ATP-dependent clamp loader (RFC and RFC-like) complexes for DNA clamps, such as the POL30/PCNA homotrimer and the checkpoint clamp DDC1:MEC3:RAD17 complex. During a clamp loading circle, the RFC:clamp complex binds to DNA and the recognition of the double-stranded/single-stranded junction stimulates ATP hydrolysis by RFC. The complex presumably provides bipartite ATP sites in which one subunit supplies a catalytic site for hydrolysis of ATP bound to the neighboring subunit. Dissociation of RFC from the clamp leaves the clamp encircling DNA. Component of the replication factor C (RFC or activator 1) complex which loads POL30/PCNA and acts during elongation of primed DNA templates by DNA polymerase delta and epsilon. RFC has an essential but redundant activity in sister chromatid cohesion establishment. Component of the RFC-like complex CTF18-RFC which is required for efficient establishment of chromosome cohesion during S-phase and may load or unload POL30/PCNA. Component of the RFC-like RAD24-RFC complex which loads the checkpoint clamp DDC1:MEC3:RAD17 complex and is involved in DNA repair pathways. Component of the RFC-like ELG1-RFC complex which appears to have a role in DNA replication, replication fork re-start, recombination and repair. The sequence is that of Replication factor C subunit 5 (RFC5) from Saccharomyces cerevisiae (strain ATCC 204508 / S288c) (Baker's yeast).